The primary structure comprises 1813 residues: Nonribosomal peptide synthetase 1 (1813 aa).

An adenylation region spans residues 89–494 (EKARRDPSRQ…GRGDQQVKLR (406 aa)). Residues 624-699 (EPQSERERQL…ELAITLKHSD (76 aa)) enclose the Carrier 1 domain. Serine 660 is modified (O-(pantetheine 4'-phosphoryl)serine). Residues 738 to 1159 (DVYPCTTLQE…LPMTDDELAE (422 aa)) form a condensation 1 region. The 77-residue stretch at 1282–1358 (QVTTPKQQKL…DMADIAKESL (77 aa)) folds into the Carrier 2 domain. An O-(pantetheine 4'-phosphoryl)serine modification is found at serine 1319. The tract at residues 1427 to 1806 (FYLDAAVDQS…STLFQTDVME (380 aa)) is condensation 2.

It belongs to the NRP synthetase family.

It functions in the pathway siderophore biosynthesis. Its function is as follows. Nonribosomal peptide synthetase; part of the gene cluster that mediates the biosynthesis of hydroxamate-containing siderophores that play a critical role in virulence via intracellular iron acquisition during macrophage infection. The protein is Nonribosomal peptide synthetase 1 of Ajellomyces capsulatus (Darling's disease fungus).